The primary structure comprises 214 residues: NADH-quinone oxidoreductase subunit C (214 aa).

Belongs to the complex I 30 kDa subunit family. NDH-1 is composed of 14 different subunits. Subunits NuoB, C, D, E, F, and G constitute the peripheral sector of the complex.

Its subcellular location is the cell inner membrane. The catalysed reaction is a quinone + NADH + 5 H(+)(in) = a quinol + NAD(+) + 4 H(+)(out). Its function is as follows. NDH-1 shuttles electrons from NADH, via FMN and iron-sulfur (Fe-S) centers, to quinones in the respiratory chain. The immediate electron acceptor for the enzyme in this species is believed to be ubiquinone. Couples the redox reaction to proton translocation (for every two electrons transferred, four hydrogen ions are translocated across the cytoplasmic membrane), and thus conserves the redox energy in a proton gradient. In Francisella tularensis subsp. holarctica (strain LVS), this protein is NADH-quinone oxidoreductase subunit C.